A 32-amino-acid polypeptide reads, in one-letter code: Peptide tarsal-less AA (32 aa).

Positions 1-32 are disordered; sequence MLDPTGTYRRPRDTQDSRQKRRQDCLDPTGQY. Copy 1 of the repeat occupies 2–8; the sequence is LDPTGTY. The 2 X 7 AA repeats of L-D-P-T-G-[TQ]-Y stretch occupies residues 2–32; the sequence is LDPTGTYRRPRDTQDSRQKRRQDCLDPTGQY. The span at 10 to 25 shows a compositional bias: basic and acidic residues; that stretch reads RPRDTQDSRQKRRQDC. Repeat 2 spans residues 26–32; it reads LDPTGQY.

The protein resides in the cytoplasm. It is found in the nucleus. Its function is as follows. One of four peptides (tal-1A, tal-2A, tal-3A and tal-AA) produced from a polycistronic gene that function redundantly in several developmental processes. Required in early stages of leg development for the intercalation of the tarsal segments during the mid-third instar stage and later for tarsal joint formation. Promotes the post-translational modification of ovo isoform B (svb) into its active form which in turn initiates trichome development and promotes tarsal joint development. This is likely due to recruitment of the E3 ubiquitin-protein ligase Ubr3 to svb for ubiquitination of its N-terminus, converting svb into a transcriptional activator. Also enhances interaction of Ubr3 with Diap1. Required for correct wing and leg formation through its regulation of several genes including those in the Notch signaling pathway. Essential for denticle formation and may have a role in the developmental timing of trichome differentiation. Essential for the development of taenidial folds in the trachea. This is Peptide tarsal-less AA from Drosophila melanogaster (Fruit fly).